Reading from the N-terminus, the 262-residue chain is Pyridoxine 5'-phosphate synthase (262 aa).

Asn-6 provides a ligand contact to 3-amino-2-oxopropyl phosphate. 8-9 (DH) contributes to the 1-deoxy-D-xylulose 5-phosphate binding site. Arg-17 serves as a coordination point for 3-amino-2-oxopropyl phosphate. His-43 functions as the Proton acceptor in the catalytic mechanism. The 1-deoxy-D-xylulose 5-phosphate site is built by Arg-45 and His-50. Glu-70 (proton acceptor) is an active-site residue. Position 102 (Thr-102) interacts with 1-deoxy-D-xylulose 5-phosphate. His-215 serves as the catalytic Proton donor. 3-amino-2-oxopropyl phosphate is bound by residues Gly-216 and 237 to 238 (GH).

The protein belongs to the PNP synthase family. As to quaternary structure, homooctamer; tetramer of dimers.

The protein resides in the cytoplasm. It catalyses the reaction 3-amino-2-oxopropyl phosphate + 1-deoxy-D-xylulose 5-phosphate = pyridoxine 5'-phosphate + phosphate + 2 H2O + H(+). The protein operates within cofactor biosynthesis; pyridoxine 5'-phosphate biosynthesis; pyridoxine 5'-phosphate from D-erythrose 4-phosphate: step 5/5. In terms of biological role, catalyzes the complicated ring closure reaction between the two acyclic compounds 1-deoxy-D-xylulose-5-phosphate (DXP) and 3-amino-2-oxopropyl phosphate (1-amino-acetone-3-phosphate or AAP) to form pyridoxine 5'-phosphate (PNP) and inorganic phosphate. This is Pyridoxine 5'-phosphate synthase from Helicobacter pylori (strain HPAG1).